A 344-amino-acid chain; its full sequence is Serpentine receptor class delta-3 (344 aa).

7 consecutive transmembrane segments (helical) span residues 21–41 (IIGY…IILI), 54–74 (MLHL…MLAL), 102–122 (FLHV…MISF), 142–162 (ICIL…SDVA), 203–223 (FSAI…IVFF), 259–279 (IVPI…FQVV), and 287–307 (MPFR…LYFV).

It belongs to the nematode receptor-like protein srd family.

It is found in the membrane. The sequence is that of Serpentine receptor class delta-3 (srd-3) from Caenorhabditis elegans.